The primary structure comprises 104 residues: Large ribosomal subunit protein bL21 (104 aa).

This sequence belongs to the bacterial ribosomal protein bL21 family. Part of the 50S ribosomal subunit. Contacts protein L20.

In terms of biological role, this protein binds to 23S rRNA in the presence of protein L20. This chain is Large ribosomal subunit protein bL21, found in Nitrosococcus oceani (strain ATCC 19707 / BCRC 17464 / JCM 30415 / NCIMB 11848 / C-107).